The following is a 185-amino-acid chain: DAN domain family member 5 (185 aa).

The first 23 residues, 1 to 23 (MFRSQFTTLLGLFSGAWLPTGSG), serve as a signal peptide directing secretion. Asn-39 carries N-linked (GlcNAc...) asparagine glycosylation. Cystine bridges form between Cys-97–Cys-144, Cys-111–Cys-158, Cys-121–Cys-179, and Cys-125–Cys-181. The CTCK domain occupies 97–182 (CKALSFVQVI…TVLVQKCQCR (86 aa)).

The protein belongs to the DAN family. As to expression, expressed throughout the neural retina and in the photoreceptor nuclear layer. In the retina, widely expressed in inner nuclear layer, as well as in the ganglion cell layer.

The protein resides in the secreted. Functionally, antagonist of the extracellular signaling protein NODAL, which is required for correct left-right patterning during embryonic development. Antagonist of BMP4 signaling. Antagonist of TGF-beta signaling. Independently of its role in left-right axis establishment, plays a role during heart development, possibly through the regulation of TGF-beta/Nodal signaling pathway. Displays anti-angiogenic activity by inhibiting endothelial sprouting, migration, and proliferation. Once internalized by endothelial cells, may alter their redox and glycolytic balance. This is DAN domain family member 5 (Dand5) from Mus musculus (Mouse).